A 254-amino-acid polypeptide reads, in one-letter code: Isoprenyl transferase (254 aa).

The active site involves Asp24. Mg(2+) is bound at residue Asp24. Substrate contacts are provided by residues 25–28, Trp29, Arg37, His41, and 69–71; these read GNGR and SSE. The Proton acceptor role is filled by Asn72. Substrate is bound by residues Trp73, Arg75, Arg192, and 198-200; that span reads RIS. Glu211 contacts Mg(2+).

This sequence belongs to the UPP synthase family. Homodimer. Mg(2+) serves as cofactor.

In terms of biological role, catalyzes the condensation of isopentenyl diphosphate (IPP) with allylic pyrophosphates generating different type of terpenoids. This chain is Isoprenyl transferase, found in Bordetella parapertussis (strain 12822 / ATCC BAA-587 / NCTC 13253).